Reading from the N-terminus, the 747-residue chain is Catalase-peroxidase 1 (747 aa).

Over residues 1 to 22 the composition is skewed to basic and acidic residues; that stretch reads MTDTSDARPPHSDDKTRSHSES. Residues 1–39 form a disordered region; the sequence is MTDTSDARPPHSDDKTRSHSESENPAIDSPEPKVHAPLT. Positions 112-240 form a cross-link, tryptophyl-tyrosyl-methioninium (Trp-Tyr) (with M-266); that stretch reads WHAAGTYRIF…FGATTMGLIY (129 aa). The Proton acceptor role is filled by H113. A cross-link (tryptophyl-tyrosyl-methioninium (Tyr-Met) (with W-112)) is located at residues 240-266; that stretch reads YVNPEGPEGKPDPLAAAHDIRETFGRM. H281 provides a ligand contact to heme b.

Belongs to the peroxidase family. Peroxidase/catalase subfamily. As to quaternary structure, homodimer or homotetramer. Requires heme b as cofactor. Post-translationally, formation of the three residue Trp-Tyr-Met cross-link is important for the catalase, but not the peroxidase activity of the enzyme.

It catalyses the reaction H2O2 + AH2 = A + 2 H2O. It carries out the reaction 2 H2O2 = O2 + 2 H2O. Its function is as follows. Bifunctional enzyme with both catalase and broad-spectrum peroxidase activity. This is Catalase-peroxidase 1 from Mycolicibacterium vanbaalenii (strain DSM 7251 / JCM 13017 / BCRC 16820 / KCTC 9966 / NRRL B-24157 / PYR-1) (Mycobacterium vanbaalenii).